We begin with the raw amino-acid sequence, 805 residues long: Centrosomal protein of 85 kDa-like (805 aa).

Disordered stretches follow at residues 1–27 (MWGRFLAPEASGRDSPGGARSFPAGPD) and 50–89 (RNNHIRRHSIASDSGDTGIGTSCSDSVEDHSTSSGTLSFK). Ser-15 carries the phosphoserine modification. Residues 60–74 (ASDSGDTGIGTSCSD) are compositionally biased toward polar residues. A Phosphoserine modification is found at Ser-207. A coiled-coil region spans residues 439-682 (SQQGEFEQKL…LENQRQTDET (244 aa)).

This sequence belongs to the CEP85 family. In terms of tissue distribution, isoform 1 and isoform 4 are expressed in spleen, lymph, thymus, tonsil and peripheral blood leukocytes, with isoform 1 expressed at higher levels. Isoform 4 is detected in K-562 leukemia cells and in the blood of precursor T lymphoblastic lymphoma (T-ALL) patients.

It is found in the cytoplasm. The protein localises to the cytoskeleton. It localises to the microtubule organizing center. Its subcellular location is the centrosome. Functionally, plays an essential role in neuronal cell migration. The polypeptide is Centrosomal protein of 85 kDa-like (Homo sapiens (Human)).